Reading from the N-terminus, the 316-residue chain is Aspartate carbamoyltransferase catalytic subunit (316 aa).

Carbamoyl phosphate-binding residues include Arg56 and Thr57. Position 84 (Lys84) interacts with L-aspartate. Carbamoyl phosphate contacts are provided by Arg106, His139, and Gln142. Arg172 and Arg224 together coordinate L-aspartate. Carbamoyl phosphate contacts are provided by Gly268 and Pro269.

This sequence belongs to the aspartate/ornithine carbamoyltransferase superfamily. ATCase family. Heterododecamer (2C3:3R2) of six catalytic PyrB chains organized as two trimers (C3), and six regulatory PyrI chains organized as three dimers (R2).

The enzyme catalyses carbamoyl phosphate + L-aspartate = N-carbamoyl-L-aspartate + phosphate + H(+). It functions in the pathway pyrimidine metabolism; UMP biosynthesis via de novo pathway; (S)-dihydroorotate from bicarbonate: step 2/3. In terms of biological role, catalyzes the condensation of carbamoyl phosphate and aspartate to form carbamoyl aspartate and inorganic phosphate, the committed step in the de novo pyrimidine nucleotide biosynthesis pathway. This is Aspartate carbamoyltransferase catalytic subunit from Ligilactobacillus salivarius (strain UCC118) (Lactobacillus salivarius).